Reading from the N-terminus, the 232-residue chain is Chromosome partition protein MukE (232 aa).

Residues 203 to 232 form a disordered region; the sequence is HTKEPSQGSLLSEEDQEEQAQEEMTEEGEA. Positions 214–232 are enriched in acidic residues; the sequence is SEEDQEEQAQEEMTEEGEA.

Belongs to the MukE family. Interacts, and probably forms a ternary complex, with MukF and MukB. The complex formation is stimulated by calcium or magnesium.

The protein localises to the cytoplasm. The protein resides in the nucleoid. In terms of biological role, involved in chromosome condensation, segregation and cell cycle progression. May participate in facilitating chromosome segregation by condensation DNA from both sides of a centrally located replisome during cell division. Probably acts via its interaction with MukB and MukF. The polypeptide is Chromosome partition protein MukE (Vibrio parahaemolyticus serotype O3:K6 (strain RIMD 2210633)).